The following is a 273-amino-acid chain: Flagellin FljM (273 aa).

Belongs to the bacterial flagellin family. In C.crescentus, the flagellar filament is composed of multiple flagellins of 29 kDa; 27 kDa and 25 kDa.

It localises to the secreted. The protein localises to the bacterial flagellum. Its function is as follows. Flagellin is the subunit protein which polymerizes to form the filaments of bacterial flagella. In Caulobacter vibrioides (strain ATCC 19089 / CIP 103742 / CB 15) (Caulobacter crescentus), this protein is Flagellin FljM (fljM).